Reading from the N-terminus, the 303-residue chain is Cyclin-dependent kinase 4 (303 aa).

Residue Ala-2 is modified to N-acetylalanine. The Protein kinase domain maps to 6 to 295 (YEPVAEIGVG…AFRALQHSYL (290 aa)). ATP is bound by residues 12 to 20 (IGVGAYGTV) and Lys-35. A required for binding D-type cyclins region spans residues 50 to 56 (PISTVRE). Residue Asp-140 is the Proton acceptor of the active site. Phosphothreonine; by CAK is present on Thr-172.

It belongs to the protein kinase superfamily. CMGC Ser/Thr protein kinase family. CDC2/CDKX subfamily. In terms of assembly, component of the D-CDK4 complex, composed of CDK4 and some D-type G1 cyclin (CCND1, CCND2 or CCND3). Interacts directly in the complex with CCND1, CCND2 or CCND3. Interacts with SEI1 and ZNF655. Forms a ternary complex, cyclin D-CDK4-CDKN1B, involved in modulating CDK4 enzymatic activity. Interacts directly with CDKN1B (phosphorylated on 'Tyr-88' and 'Tyr-89'); the interaction allows assembly of the cyclin D-CDK4 complex, Thr-172 phosphorylation, nuclear translocation and enhances the cyclin D-CDK4 complex activity. CDK4 activity is either inhibited or enhanced depending on stoichiometry of complex. The non-tyrosine-phosphorylated form of CDKN1B prevents T-loop phosphorylation of CDK4 producing inactive CDK4. Interacts (unphosphorylated form) with CDK2. Also forms ternary complexes with CDKN1A or CDKN2A. Interacts directly with CDKN1A (via its N-terminal); the interaction promotes the assembly of the cyclin D-CDK4 complex, its nuclear translocation and promotes the cyclin D-dependent enzyme activity of CDK4. Interacts with CCND1; the interaction is prevented with the binding of CCND1 to INSM1 during cell cycle progression. Probably forms a complex composed of chaperones HSP90 and HSP70, co-chaperones CDC37, PPP5C, TSC1 and client protein TSC2, CDK4, AKT, RAF1 and NR3C1; this complex does not contain co-chaperones STIP1/HOP and PTGES3/p23. Interacts with CEBPA (when phosphorylated). Interacts with FNIP1 and FNIP2. Post-translationally, phosphorylation at Thr-172 is required for enzymatic activity. Phosphorylated, in vitro, at this site by CCNH-CDK7, but, in vivo, appears to be phosphorylated by a proline-directed kinase. In the cyclin D-CDK4-CDKN1B complex, this phosphorylation and consequent CDK4 enzyme activity, is dependent on the tyrosine phosphorylation state of CDKN1B. Thus, in proliferating cells, CDK4 within the complex is phosphorylated on Thr-172 in the T-loop. In resting cells, phosphorylation on Thr-172 is prevented by the non-tyrosine-phosphorylated form of CDKN1B.

The protein localises to the cytoplasm. It is found in the nucleus. Its subcellular location is the nucleus membrane. It catalyses the reaction L-seryl-[protein] + ATP = O-phospho-L-seryl-[protein] + ADP + H(+). The catalysed reaction is L-threonyl-[protein] + ATP = O-phospho-L-threonyl-[protein] + ADP + H(+). With respect to regulation, both phosphorylation at Thr-172 and binding of a D-type cyclin are necessary for enzymatic activity. Full activation of the cyclin-D-CDK4 complex appears to require other factors such as recruitment of the substrate via a substrate recruitment motif, and/or formation of the CDKN1B ternary complex. Inhibited by INK4 family members. In resting cells, the non-tyrosine-phosphorylated form of CDKN1B prevents phosphorylation at Thr-172 and inactivation, while, in proliferating cells, tyrosine phosphorylation of CDKN1B allows phosphorylation of Thr-172 of CDK4 and subsequent activation. Ser/Thr-kinase component of cyclin D-CDK4 (DC) complexes that phosphorylate and inhibit members of the retinoblastoma (RB) protein family including RB1 and regulate the cell-cycle during G(1)/S transition. Phosphorylation of RB1 allows dissociation of the transcription factor E2F from the RB/E2F complexes and the subsequent transcription of E2F target genes which are responsible for the progression through the G(1) phase. Hypophosphorylates RB1 in early G(1) phase. Cyclin D-CDK4 complexes are major integrators of various mitogenenic and antimitogenic signals. Also phosphorylates SMAD3 in a cell-cycle-dependent manner and represses its transcriptional activity. Component of the ternary complex, cyclin D/CDK4/CDKN1B, required for nuclear translocation and activity of the cyclin D-CDK4 complex. The sequence is that of Cyclin-dependent kinase 4 (CDK4) from Bos taurus (Bovine).